We begin with the raw amino-acid sequence, 140 residues long: Callisulfakinin (140 aa).

The signal sequence occupies residues 1 to 30; it reads MYSQQRIFNSKYFIFFIAVLSIFWLPTMSA. Positions 31–109 are excised as a propeptide; it reads RNLENSKNEN…LEYEDEDRSK (79 aa). Y114 carries the sulfotyrosine modification. At F119 the chain carries Phenylalanine amide. Y131 carries the sulfotyrosine modification. F136 carries the post-translational modification Phenylalanine amide. Positions 139–140 are excised as a propeptide; that stretch reads SI.

Belongs to the gastrin/cholecystokinin family. As to expression, in brain, it is specifically expressed in four pairs of neurons. Not expressed in other cells of the brain and in the thoracico-abdominal ganglion.

It is found in the secreted. Callisulfakinin I is a neuropeptide. The existence of Callisulfakinin II is uncertain. This Calliphora vomitoria (Blue bottle fly) protein is Callisulfakinin.